Reading from the N-terminus, the 119-residue chain is Anamorsin homolog (119 aa).

A compositionally biased stretch (polar residues) spans 1–15 (MSSSATSTQAFSLKT). 2 disordered regions span residues 1–21 (MSSS…PIPD) and 33–119 (LKQA…TDDV). Residues Cys-42, Cys-49, Cys-52, and Cys-54 each contribute to the [2Fe-2S] cluster site. The segment at 42 to 54 (CTTRRRACKNCVC) is fe-S binding site A. [4Fe-4S] cluster-binding residues include Cys-81, Cys-84, Cys-92, and Cys-95. Short sequence motifs (cx2C motif) lie at residues 81–84 (CGNC) and 92–95 (CANC). Residues 81–95 (CGNCSKGDAFRCANC) are fe-S binding site B.

This sequence belongs to the anamorsin family. As to quaternary structure, monomer. The cofactor is [2Fe-2S] cluster. Requires [4Fe-4S] cluster as cofactor.

It is found in the cytoplasm. Its subcellular location is the mitochondrion intermembrane space. Component of the cytosolic iron-sulfur (Fe-S) protein assembly (CIA) machinery. Required for the maturation of extramitochondrial Fe-S proteins. Part of an electron transfer chain functioning in an early step of cytosolic Fe-S biogenesis, facilitating the de novo assembly of a [4Fe-4S] cluster on the cytosolic Fe-S scaffold complex. Electrons are transferred from NADPH via a FAD- and FMN-containing diflavin oxidoreductase. Together with the diflavin oxidoreductase, also required for the assembly of the diferric tyrosyl radical cofactor of ribonucleotide reductase (RNR), probably by providing electrons for reduction during radical cofactor maturation in the catalytic small subunit. This chain is Anamorsin homolog, found in Leishmania infantum.